A 151-amino-acid chain; its full sequence is Transcriptional regulator MraZ (151 aa).

SpoVT-AbrB domains follow at residues 5-52 (ANAI…PLSE) and 81-124 (AVDL…DEDA).

This sequence belongs to the MraZ family. Forms oligomers.

It localises to the cytoplasm. Its subcellular location is the nucleoid. The protein is Transcriptional regulator MraZ of Pseudomonas syringae pv. syringae (strain B728a).